The following is a 258-amino-acid chain: 1-(5-phosphoribosyl)-5-[(5-phosphoribosylamino)methylideneamino] imidazole-4-carboxamide isomerase 2 (258 aa).

The Proton acceptor role is filled by D14. The Proton donor role is filled by D140.

Belongs to the HisA/HisF family.

The protein localises to the cytoplasm. The enzyme catalyses 1-(5-phospho-beta-D-ribosyl)-5-[(5-phospho-beta-D-ribosylamino)methylideneamino]imidazole-4-carboxamide = 5-[(5-phospho-1-deoxy-D-ribulos-1-ylimino)methylamino]-1-(5-phospho-beta-D-ribosyl)imidazole-4-carboxamide. Its pathway is amino-acid biosynthesis; L-histidine biosynthesis; L-histidine from 5-phospho-alpha-D-ribose 1-diphosphate: step 4/9. In Photorhabdus laumondii subsp. laumondii (strain DSM 15139 / CIP 105565 / TT01) (Photorhabdus luminescens subsp. laumondii), this protein is 1-(5-phosphoribosyl)-5-[(5-phosphoribosylamino)methylideneamino] imidazole-4-carboxamide isomerase 2 (hisA2).